Reading from the N-terminus, the 190-residue chain is MVISPSTLLVSITLSIICLIVSILYTSKSFVAQRNFLTSGNIAFSGASLNITSDGSAVYSWTNGPFSINILKFLAFLSLINLFLFVGLEFQETNVTFSIWLSNTAANVSLSILFDHYFIVFLTVALVVTWSIMNFSLLYGEDPNKNVFLLLTIFLLNMLILTCSNSLFLLFLGWEGVGFLSFLLIKMMNH.

The next 6 membrane-spanning stretches (helical) occupy residues 1–21 (MVISPSTLLVSITLSIICLIV), 68–88 (INILKFLAFLSLINLFLFVGL), 94–114 (NVTFSIWLSNTAANVSLSILF), 118–138 (FIVFLTVALVVTWSIMNFSLL), 146–166 (NVFLLLTIFLLNMLILTCSNS), and 167–187 (LFLLFLGWEGVGFLSFLLIKM).

It belongs to the complex I subunit 5 family.

It is found in the mitochondrion inner membrane. It catalyses the reaction a ubiquinone + NADH + 5 H(+)(in) = a ubiquinol + NAD(+) + 4 H(+)(out). Its function is as follows. Core subunit of the mitochondrial membrane respiratory chain NADH dehydrogenase (Complex I) that is believed to belong to the minimal assembly required for catalysis. Complex I functions in the transfer of electrons from NADH to the respiratory chain. The immediate electron acceptor for the enzyme is believed to be ubiquinone. The sequence is that of NADH-ubiquinone oxidoreductase chain 5 (ND5) from Arbacia lixula (Black urchin).